The following is a 120-amino-acid chain: MSGRGKGAKSKSKAKSRSSRAGLQFPVGRVHRFLRKGNYANRVGAGAPVYLAAVLEYLTAEILELAGNAARDNKKSRIIPRHLQLAVRNDEELNKLLGGVTIAQGGVLPNIQAVLLPKKK.

A compositionally biased stretch (basic residues) spans 1-18 (MSGRGKGAKSKSKAKSRS). Residues 1–22 (MSGRGKGAKSKSKAKSRSSRAG) are disordered. Residue serine 2 is modified to N-acetylserine. Position 2 is a phosphoserine (serine 2). Residue glutamine 104 is modified to N5-methylglutamine. A Glycyl lysine isopeptide (Lys-Gly) (interchain with G-Cter in ubiquitin) cross-link involves residue lysine 119.

It belongs to the histone H2A family. As to quaternary structure, the nucleosome is a histone octamer containing two molecules each of H2A, H2B, H3 and H4 assembled in one H3-H4 heterotetramer and two H2A-H2B heterodimers. The octamer wraps approximately 147 bp of DNA. In terms of processing, monoubiquitination of Lys-119 gives a specific tag for epigenetic transcriptional repression. Phosphorylation of Ser-2 directly represses transcription.

Its subcellular location is the nucleus. It is found in the chromosome. Its function is as follows. Core component of nucleosome. Nucleosomes wrap and compact DNA into chromatin, limiting DNA accessibility to the cellular machineries which require DNA as a template. Histones thereby play a central role in transcription regulation, DNA repair, DNA replication and chromosomal stability. DNA accessibility is regulated via a complex set of post-translational modifications of histones, also called histone code, and nucleosome remodeling. The sequence is that of Late histone H2A.2.2 from Psammechinus miliaris (Green sea urchin).